A 562-amino-acid polypeptide reads, in one-letter code: Membrane protein insertase YidC (562 aa).

The chain crosses the membrane as a helical span at residues Gln4–Glu24. The segment at Thr33–Asp71 is disordered. Acidic residues predominate over residues Glu35–Asp58. Positions Thr61–Asp71 are enriched in basic and acidic residues. The next 4 membrane-spanning stretches (helical) occupy residues Met330 to Leu350, Ile356 to Tyr376, Leu426 to Leu446, and Ile499 to Val519.

It belongs to the OXA1/ALB3/YidC family. Type 1 subfamily. In terms of assembly, interacts with the Sec translocase complex via SecD. Specifically interacts with transmembrane segments of nascent integral membrane proteins during membrane integration.

The protein localises to the cell inner membrane. In terms of biological role, required for the insertion and/or proper folding and/or complex formation of integral membrane proteins into the membrane. Involved in integration of membrane proteins that insert both dependently and independently of the Sec translocase complex, as well as at least some lipoproteins. Aids folding of multispanning membrane proteins. The protein is Membrane protein insertase YidC of Alkalilimnicola ehrlichii (strain ATCC BAA-1101 / DSM 17681 / MLHE-1).